The sequence spans 186 residues: Large ribosomal subunit protein uL5 (186 aa).

The protein belongs to the universal ribosomal protein uL5 family. Part of the 50S ribosomal subunit; part of the 5S rRNA/L5/L18/L25 subcomplex. Contacts the 5S rRNA and the P site tRNA. Forms a bridge to the 30S subunit in the 70S ribosome.

In terms of biological role, this is one of the proteins that bind and probably mediate the attachment of the 5S RNA into the large ribosomal subunit, where it forms part of the central protuberance. In the 70S ribosome it contacts protein S13 of the 30S subunit (bridge B1b), connecting the 2 subunits; this bridge is implicated in subunit movement. Contacts the P site tRNA; the 5S rRNA and some of its associated proteins might help stabilize positioning of ribosome-bound tRNAs. This chain is Large ribosomal subunit protein uL5, found in Mycoplasmopsis synoviae (strain 53) (Mycoplasma synoviae).